The primary structure comprises 179 residues: Interleukin-10 (179 aa).

The first 19 residues, 1 to 19 (MPSSSALLCCLVFLAGVAA), serve as a signal peptide directing secretion. Disulfide bonds link C31–C127 and C81–C133. N135 is a glycosylation site (N-linked (GlcNAc...) asparagine).

Belongs to the IL-10 family. Homodimer. Interacts with IL10RA and IL10RB.

It localises to the secreted. Its function is as follows. Major immune regulatory cytokine that acts on many cells of the immune system where it has profound anti-inflammatory functions, limiting excessive tissue disruption caused by inflammation. Mechanistically, IL10 binds to its heterotetrameric receptor comprising IL10RA and IL10RB leading to JAK1 and STAT2-mediated phosphorylation of STAT3. In turn, STAT3 translocates to the nucleus where it drives expression of anti-inflammatory mediators. Targets antigen-presenting cells (APCs) such as macrophages and monocytes and inhibits their release of pro-inflammatory cytokines including granulocyte-macrophage colony-stimulating factor /GM-CSF, granulocyte colony-stimulating factor/G-CSF, IL-1 alpha, IL-1 beta, IL-6, IL-8 and TNF-alpha. Also interferes with antigen presentation by reducing the expression of MHC-class II and co-stimulatory molecules, thereby inhibiting their ability to induce T cell activation. In addition, controls the inflammatory response of macrophages by reprogramming essential metabolic pathways including mTOR signaling. The polypeptide is Interleukin-10 (IL10) (Cervus elaphus (Red deer)).